Reading from the N-terminus, the 368-residue chain is Peptide chain release factor 2 (368 aa).

An N5-methylglutamine modification is found at glutamine 250.

It belongs to the prokaryotic/mitochondrial release factor family. Methylated by PrmC. Methylation increases the termination efficiency of RF2.

The protein resides in the cytoplasm. Functionally, peptide chain release factor 2 directs the termination of translation in response to the peptide chain termination codons UGA and UAA. The protein is Peptide chain release factor 2 of Rickettsia bellii (strain RML369-C).